The primary structure comprises 425 residues: Pectate lyase L (425 aa).

Positions 1 to 25 are cleaved as a signal peptide; the sequence is MKYLNCFISTGLAAFFLVNSTSVLA. The cysteines at positions 28 and 114 are disulfide-linked. Asp-209, Asp-233, Asp-234, and Asp-237 together coordinate Ca(2+). Lys-273 acts as the Proton acceptor in catalysis. Ca(2+) contacts are provided by Asn-402, Ser-413, Ala-416, Asp-418, and Glu-423.

This sequence belongs to the polysaccharide lyase 9 family. It depends on Ca(2+) as a cofactor.

It localises to the secreted. The enzyme catalyses Eliminative cleavage of (1-&gt;4)-alpha-D-galacturonan to give oligosaccharides with 4-deoxy-alpha-D-galact-4-enuronosyl groups at their non-reducing ends.. It functions in the pathway glycan metabolism; pectin degradation; 2-dehydro-3-deoxy-D-gluconate from pectin: step 2/5. Functionally, presents an endo-cleaving activity on polygalacturonate or partially methylated pectin. This is Pectate lyase L (pelL) from Dickeya chrysanthemi (Pectobacterium chrysanthemi).